The sequence spans 301 residues: tRNA dimethylallyltransferase (301 aa).

An ATP-binding site is contributed by 12–19; the sequence is GPTAVGKT. Substrate is bound at residue 14 to 19; it reads TAVGKT. Residues 37–40 form an interaction with substrate tRNA region; that stretch reads DSQQ.

The protein belongs to the IPP transferase family. As to quaternary structure, monomer. Requires Mg(2+) as cofactor.

The catalysed reaction is adenosine(37) in tRNA + dimethylallyl diphosphate = N(6)-dimethylallyladenosine(37) in tRNA + diphosphate. Catalyzes the transfer of a dimethylallyl group onto the adenine at position 37 in tRNAs that read codons beginning with uridine, leading to the formation of N6-(dimethylallyl)adenosine (i(6)A). This Streptococcus uberis (strain ATCC BAA-854 / 0140J) protein is tRNA dimethylallyltransferase.